Consider the following 600-residue polypeptide: Autophagy-related protein 22-2 (600 aa).

The segment at 1–30 (MAFASPPASPPDEDGQARAPRYPGEDTTPT) is disordered. Helical transmembrane passes span 41–61 (YGIA…PLTL), 117–137 (SFAM…LISF), 149–168 (TLLV…FVFI), and 186–206 (CLGS…ASDP). A disordered region spans residues 234–257 (SFDGDEPTHRPPTGLGLGGATGTS). 4 helical membrane passes run 271-291 (GVGL…LLLF), 304-324 (TLPL…FTMV), 378-398 (VIVF…VSGT), and 414-434 (VALL…LWPI). N-linked (GlcNAc...) asparagine glycosylation occurs at N444. Transmembrane regions (helical) follow at residues 449–469 (VCIA…IPLF), 484–506 (YPLA…SFFG), 526–546 (KGSS…TGQV), and 549–569 (GFFF…MVDA).

Belongs to the ATG22 family.

The protein resides in the vacuole membrane. Its function is as follows. Vacuolar effluxer which mediate the efflux of amino acids resulting from autophagic degradation. The release of autophagic amino acids allows the maintenance of protein synthesis and viability during nitrogen starvation. This is Autophagy-related protein 22-2 (atg22-2) from Aspergillus niger (strain ATCC MYA-4892 / CBS 513.88 / FGSC A1513).